A 410-amino-acid polypeptide reads, in one-letter code: Aspartate aminotransferase (410 aa).

L-aspartate contacts are provided by glycine 47, tryptophan 135, and asparagine 185. N6-(pyridoxal phosphate)lysine is present on lysine 249. Arginine 385 is a binding site for L-aspartate.

The protein belongs to the class-I pyridoxal-phosphate-dependent aminotransferase family. As to quaternary structure, homodimer. Requires pyridoxal 5'-phosphate as cofactor.

It localises to the cytoplasm. It catalyses the reaction L-aspartate + 2-oxoglutarate = oxaloacetate + L-glutamate. Its function is as follows. Catalyzes the reversible conversion of aspartate and 2-oxoglutarate to glutamate and oxaloacetate. In Rhizobium meliloti (Ensifer meliloti), this protein is Aspartate aminotransferase.